Consider the following 439-residue polypeptide: Xylose isomerase (439 aa).

Residues H101 and D104 contribute to the active site. Residues E232, E268, H271, D296, D307, D309, and D339 each contribute to the Mg(2+) site.

It belongs to the xylose isomerase family. Homotetramer. It depends on Mg(2+) as a cofactor.

It is found in the cytoplasm. It catalyses the reaction alpha-D-xylose = alpha-D-xylulofuranose. In Marinomonas sp. (strain MWYL1), this protein is Xylose isomerase.